Reading from the N-terminus, the 164-residue chain is Ribonuclease P protein component 2 (164 aa).

It belongs to the eukaryotic/archaeal RNase P protein component 2 family. As to quaternary structure, consists of a catalytic RNA component and at least 4-5 protein subunits.

Its subcellular location is the cytoplasm. It carries out the reaction Endonucleolytic cleavage of RNA, removing 5'-extranucleotides from tRNA precursor.. Its function is as follows. Part of ribonuclease P, a protein complex that generates mature tRNA molecules by cleaving their 5'-ends. The chain is Ribonuclease P protein component 2 from Halobacterium salinarum (strain ATCC 29341 / DSM 671 / R1).